Reading from the N-terminus, the 510-residue chain is ATP synthase subunit alpha 1 (510 aa).

Residue 169–176 coordinates ATP; it reads GDRQTGKT.

Belongs to the ATPase alpha/beta chains family. As to quaternary structure, F-type ATPases have 2 components, CF(1) - the catalytic core - and CF(0) - the membrane proton channel. CF(1) has five subunits: alpha(3), beta(3), gamma(1), delta(1), epsilon(1). CF(0) has three main subunits: a(1), b(2) and c(9-12). The alpha and beta chains form an alternating ring which encloses part of the gamma chain. CF(1) is attached to CF(0) by a central stalk formed by the gamma and epsilon chains, while a peripheral stalk is formed by the delta and b chains.

It is found in the cell inner membrane. It catalyses the reaction ATP + H2O + 4 H(+)(in) = ADP + phosphate + 5 H(+)(out). Its function is as follows. Produces ATP from ADP in the presence of a proton gradient across the membrane. The alpha chain is a regulatory subunit. The polypeptide is ATP synthase subunit alpha 1 (Marinomonas sp. (strain MWYL1)).